The following is a 286-amino-acid chain: Pantothenate synthetase (286 aa).

30-37 serves as a coordination point for ATP; sequence MGNLHEGH. Residue H37 is the Proton donor of the active site. Q61 serves as a coordination point for (R)-pantoate. Q61 contributes to the beta-alanine binding site. 149 to 152 is a binding site for ATP; it reads GRKD. Residue Q155 participates in (R)-pantoate binding. Residues V178 and 186–189 contribute to the ATP site; that span reads MSSR.

This sequence belongs to the pantothenate synthetase family. Homodimer.

It localises to the cytoplasm. It catalyses the reaction (R)-pantoate + beta-alanine + ATP = (R)-pantothenate + AMP + diphosphate + H(+). The protein operates within cofactor biosynthesis; (R)-pantothenate biosynthesis; (R)-pantothenate from (R)-pantoate and beta-alanine: step 1/1. Its function is as follows. Catalyzes the condensation of pantoate with beta-alanine in an ATP-dependent reaction via a pantoyl-adenylate intermediate. This Alkalilimnicola ehrlichii (strain ATCC BAA-1101 / DSM 17681 / MLHE-1) protein is Pantothenate synthetase.